Consider the following 206-residue polypeptide: Thymidylate kinase (206 aa).

ATP is bound at residue 10 to 17 (GIDGAGKS).

It belongs to the thymidylate kinase family.

It catalyses the reaction dTMP + ATP = dTDP + ADP. In terms of biological role, phosphorylation of dTMP to form dTDP in both de novo and salvage pathways of dTTP synthesis. The sequence is that of Thymidylate kinase (tmk) from Neisseria meningitidis serogroup B (strain ATCC BAA-335 / MC58).